A 405-amino-acid polypeptide reads, in one-letter code: Prenyltransferase phqA (405 aa).

The dimethylallyl diphosphate site is built by Tyr-195, Lys-262, and Gln-332.

It belongs to the tryptophan dimethylallyltransferase family.

It participates in alkaloid biosynthesis. Its function is as follows. Prenyltransferase; part of the gene cluster that mediates the biosynthesis of paraherquamide, a fungal indole alkaloid that belongs to a family of natural products containing a characteristic bicyclo[2.2.2]diazaoctane core. The first steps in the biosynthesis of paraherquamide is the production of the beta-methyl-proline precursor from L-isoleucine. They require oxidation of a terminally hydroxylated L-isoleucine to the corresponding aldehyde by enzymes which have still to be identified. Spontaneous cyclization and dehydration would yield the 4-methyl pyrolline-5-carboxylic acid, which is then reduced by the pyrroline-5-carboxylate reductase phqD leading to the beta-methyl-proline precursor. The next step of paraherquamide biosynthesis involves coupling of beta-methyl-proline and L-tryptophan by the bimodular NRPS phqB, to produce a monooxopiperazine intermediate. The reductase (R) domain of phqB utilizes NADPH for hydride transfer to reduce the thioester bond of the T domain-tethered linear dipeptide to a hemithioaminal intermediate, which spontaneously cleaves the C-S bond to release the aldehyde product. This compound undergoes spontaneous cyclization and dehydration to give a dienamine which is reverse prenylated at C-2 by the reverse prenyltransferase phqJ. The other prenyltransferase present in the cluster, phqI may be a redundant gene in the pathway. During biosynthetic assembly, the key step to produce the polycyclic core is catalyzed by the bifunctional reductase and intramolecular [4+2] Diels-Alderase, phqE, resulting in formation of the [2.2.2] diazaoctane intermediate preparaherquamide. Following formation of preparaherquamide, an indole 2,3-epoxidation-initiated pinacol-like rearrangement is catalyzed by the phqK FAD-dependent monooxygenase. The prenyltransferase phqA, the cytochrome P450 monooxygenase phqL, and the FAD-linked oxidoreductase phqH (or the cytochrome P450 monooxygenase phqM), are proposed to be involved in the formation of the pyran ring. The FAD-dependent monooxygenase phqK is likely responsible for generation of the spiro-oxindole, and the N-methylation is likely mediated by the phqN methyltransferase leading to the isolable natural product paraherquamide F. However, the order of these biosynthetic steps has still to be determined. In late-stage paraherquamide biosynthesis, the third P450 monooxygenase, phqO, is probably responsible for the C-14 hydroxylation, transforming paraherquamide F to paraherquamide G, and paraherquamide E to the final product paraherquamide A. The expansion from the 6-membered ring pyran (in paraherquamides F and G) to the 7-membered dioxepin ring (in paraherquamides A and E) represents a poorly understood but intriguing process that probably involves the 2-oxoglutarate-dependent dioxygenase phqC. Finally, the remaining members of the paraherquamide cluster, including phqI as well as phqM (or phqH), do not have a clearly prescribed role and appear to be redundant. The sequence is that of Prenyltransferase phqA from Penicillium fellutanum.